The primary structure comprises 290 residues: Lipid phosphate phosphatase 2 (290 aa).

3 helical membrane-spanning segments follow: residues 26-46 (WLILLLLIVIEIVLNVIEPFH), 69-89 (WAVPLIAVVLPFAVICVYYFI), and 93-113 (VYDLHHAILGLLFSVLITGVI). N-linked (GlcNAc...) asparagine glycosylation occurs at N142. The next 3 membrane-spanning stretches (helical) occupy residues 162–182 (SFPSGHTSWSFAGLGFLSLYL), 193–213 (GHVAKLCIVILPLLVAALVGV), and 226–246 (VFGGAIIGLTVATFCYLQFFP).

The protein belongs to the PA-phosphatase related phosphoesterase family. In terms of tissue distribution, expressed in roots, stems, leaves, buds, flowers and siliques.

It localises to the membrane. Its activity is regulated as follows. PA phosphatase activity not inhibited by N-ethylmaleimide. May play a general 'housekeeping role' in lipid metabolism. Exhibits both diacylglycerol pyrophosphate (DGPP) phosphatase and phosphatidate (PA) phosphatase activities with no preference for either substrate. May play a role downstream of the ABA signaling pathway during seed germination and in stomatal movement in leaves. The chain is Lipid phosphate phosphatase 2 (LPP2) from Arabidopsis thaliana (Mouse-ear cress).